The primary structure comprises 566 residues: MAFNFNWSPLMADASFYTRAQDLLTAALNKSPKPPIIVDDIIVTELNLGSIPPDLEILEIGDLAEDRFRGIFKMSYTGDAFLTLKTRVQANPLNTYLLTRPSFASPLPLAAATPLTIPLQITLSDFKLSGFVILVFSKQKGITVVFRNDPLESLKVSSTFDSIPFVRDFLQREIEAQLRILFMDELPAIIHRLSLRLWVPEYRAGEDIQTQPEQTAGEGPGQDPLASPPQDPVDSLGNALDESEIASLSLDSSVEAHSLFSQKNLLRLGALTDSQRTLSLFTPSIQEVVYRAWTSPSEQGDANGISTAPLSPMLSRTHSQVGSMSSFQDSASIVSSQSRSSASTHTFSGYGLNLGAGRHSKAHSRKRKKRVVDLRRPKTTSDTASVSDESAYTETASNPSVCSAPLPVVNEQPDPITPPLSPESDFRLPAIPERRRASLSRPVPRRDIATEMLRETGGPSAEPPRHRPQPADVDATPRGSLRAHITAQHDNEKQETGPSRQLPSTILPFTDEKSSSSTVDQALVERLAGEIARRMRDEKLMPTSSCGGAFWGRPDHEEYPPPAYGQ.

In terms of domain architecture, SMP-LTD spans 1–195 (MAFNFNWSPL…LPAIIHRLSL (195 aa)). Disordered stretches follow at residues 212 to 237 (PEQTAGEGPGQDPLASPPQDPVDSLG), 349 to 401 (GYGL…NPSV), 432 to 518 (PERR…SSST), and 539 to 566 (KLMPTSSCGGAFWGRPDHEEYPPPAYGQ). A compositionally biased stretch (basic residues) spans 358–370 (RHSKAHSRKRKKR). A compositionally biased stretch (polar residues) spans 380-401 (TSDTASVSDESAYTETASNPSV). Residues 444-454 (PRRDIATEMLR) are compositionally biased toward basic and acidic residues.

The protein belongs to the MDM34 family. Component of the ER-mitochondria encounter structure (ERMES) or MDM complex, composed of mmm1, mdm10, mdm12 and mdm34.

It is found in the mitochondrion outer membrane. In terms of biological role, component of the ERMES/MDM complex, which serves as a molecular tether to connect the endoplasmic reticulum (ER) and mitochondria. Components of this complex are involved in the control of mitochondrial shape and protein biogenesis, and function in nonvesicular lipid trafficking between the ER and mitochondria. Mdm34 is required for the interaction of the ER-resident membrane protein mmm1 and the outer mitochondrial membrane-resident beta-barrel protein mdm10. This Aspergillus flavus (strain ATCC 200026 / FGSC A1120 / IAM 13836 / NRRL 3357 / JCM 12722 / SRRC 167) protein is Mitochondrial distribution and morphology protein 34.